The following is a 550-amino-acid chain: Chaperonin GroEL (550 aa).

Residues 29-32, lysine 50, 86-90, glycine 418, and aspartate 499 each bind ATP; these read TAGP and DGTTT.

The protein belongs to the chaperonin (HSP60) family. Forms a cylinder of 14 subunits composed of two heptameric rings stacked back-to-back. Interacts with the co-chaperonin GroES.

It is found in the cytoplasm. It catalyses the reaction ATP + H2O + a folded polypeptide = ADP + phosphate + an unfolded polypeptide.. In terms of biological role, together with its co-chaperonin GroES, plays an essential role in assisting protein folding. The GroEL-GroES system forms a nano-cage that allows encapsulation of the non-native substrate proteins and provides a physical environment optimized to promote and accelerate protein folding. In Wolbachia sp. subsp. Brugia malayi (strain TRS), this protein is Chaperonin GroEL.